We begin with the raw amino-acid sequence, 226 residues long: ATP synthase F(0) complex subunit a (226 aa).

5 consecutive transmembrane segments (helical) span residues 9–29 (FITP…FPSL), 68–88 (WTLM…LGLL), 97–117 (QLSM…ITGF), 138–158 (IPML…ALAV), and 184–204 (ISPT…ILEF).

This sequence belongs to the ATPase A chain family. In terms of assembly, component of the ATP synthase complex composed at least of ATP5F1A/subunit alpha, ATP5F1B/subunit beta, ATP5MC1/subunit c (homooctomer), MT-ATP6/subunit a, MT-ATP8/subunit 8, ATP5ME/subunit e, ATP5MF/subunit f, ATP5MG/subunit g, ATP5MK/subunit k, ATP5MJ/subunit j, ATP5F1C/subunit gamma, ATP5F1D/subunit delta, ATP5F1E/subunit epsilon, ATP5PF/subunit F6, ATP5PB/subunit b, ATP5PD/subunit d, ATP5PO/subunit OSCP. ATP synthase complex consists of a soluble F(1) head domain (subunits alpha(3) and beta(3)) - the catalytic core - and a membrane F(0) domain - the membrane proton channel (subunits c, a, 8, e, f, g, k and j). These two domains are linked by a central stalk (subunits gamma, delta, and epsilon) rotating inside the F1 region and a stationary peripheral stalk (subunits F6, b, d, and OSCP). Interacts with DNAJC30; interaction is direct.

The protein localises to the mitochondrion inner membrane. The enzyme catalyses H(+)(in) = H(+)(out). In terms of biological role, subunit a, of the mitochondrial membrane ATP synthase complex (F(1)F(0) ATP synthase or Complex V) that produces ATP from ADP in the presence of a proton gradient across the membrane which is generated by electron transport complexes of the respiratory chain. ATP synthase complex consist of a soluble F(1) head domain - the catalytic core - and a membrane F(1) domain - the membrane proton channel. These two domains are linked by a central stalk rotating inside the F(1) region and a stationary peripheral stalk. During catalysis, ATP synthesis in the catalytic domain of F(1) is coupled via a rotary mechanism of the central stalk subunits to proton translocation. With the subunit c (ATP5MC1), forms the proton-conducting channel in the F(0) domain, that contains two crucial half-channels (inlet and outlet) that facilitate proton movement from the mitochondrial intermembrane space (IMS) into the matrix. Protons are taken up via the inlet half-channel and released through the outlet half-channel, following a Grotthuss mechanism. The chain is ATP synthase F(0) complex subunit a from Capra hircus (Goat).